A 264-amino-acid polypeptide reads, in one-letter code: Thymidylate synthase (264 aa).

R21 lines the dUMP pocket. (6R)-5,10-methylene-5,6,7,8-tetrahydrofolate is bound at residue H51. 126–127 (RR) is a binding site for dUMP. C146 functions as the Nucleophile in the catalytic mechanism. Residues 166–169 (RSCD), N177, and 207–209 (HLY) each bind dUMP. D169 is a binding site for (6R)-5,10-methylene-5,6,7,8-tetrahydrofolate. A263 provides a ligand contact to (6R)-5,10-methylene-5,6,7,8-tetrahydrofolate.

The protein belongs to the thymidylate synthase family. Bacterial-type ThyA subfamily. In terms of assembly, homodimer.

It localises to the cytoplasm. It carries out the reaction dUMP + (6R)-5,10-methylene-5,6,7,8-tetrahydrofolate = 7,8-dihydrofolate + dTMP. Its pathway is pyrimidine metabolism; dTTP biosynthesis. Catalyzes the reductive methylation of 2'-deoxyuridine-5'-monophosphate (dUMP) to 2'-deoxythymidine-5'-monophosphate (dTMP) while utilizing 5,10-methylenetetrahydrofolate (mTHF) as the methyl donor and reductant in the reaction, yielding dihydrofolate (DHF) as a by-product. This enzymatic reaction provides an intracellular de novo source of dTMP, an essential precursor for DNA biosynthesis. This chain is Thymidylate synthase, found in Shewanella baltica (strain OS185).